The following is a 270-amino-acid chain: uncharacterized protein (270 aa).

Possibly involved in pGI2 replication mechanism. This is an uncharacterized protein from Bacillus thuringiensis.